The primary structure comprises 83 residues: Putative regulatory protein FMG_0656 (83 aa).

It belongs to the RemA family.

The sequence is that of Putative regulatory protein FMG_0656 from Finegoldia magna (strain ATCC 29328 / DSM 20472 / WAL 2508) (Peptostreptococcus magnus).